The primary structure comprises 239 residues: Probable transcriptional regulatory protein YeeI (239 aa).

The protein belongs to the TACO1 family. YeeN subfamily.

It localises to the cytoplasm. The polypeptide is Probable transcriptional regulatory protein YeeI (yeeI) (Bacillus subtilis (strain 168)).